The sequence spans 308 residues: Ribonuclease HIII (308 aa).

One can recognise an RNase H type-2 domain in the interval 93–308 (MSVLGSDETG…ANTEKARKMI (216 aa)). Asp-99, Glu-100, and Asp-204 together coordinate a divalent metal cation.

This sequence belongs to the RNase HII family. RnhC subfamily. Mn(2+) is required as a cofactor. The cofactor is Mg(2+).

It localises to the cytoplasm. The enzyme catalyses Endonucleolytic cleavage to 5'-phosphomonoester.. Functionally, endonuclease that specifically degrades the RNA of RNA-DNA hybrids. The polypeptide is Ribonuclease HIII (Lysinibacillus sphaericus (strain C3-41)).